The sequence spans 61 residues: Japonicin-1CDYa (61 aa).

Residues 1–22 (MFTLKKSLLLLFFLGVINVSLC) form the signal peptide. Residues 23–45 (EEERDADEEERRDDPEERDVEVE) constitute a propeptide that is removed on maturation. Cysteine 55 and cysteine 61 are disulfide-bonded.

It belongs to the frog skin active peptide (FSAP) family. Brevinin subfamily. In terms of tissue distribution, expressed by the skin glands.

It localises to the secreted. Functionally, antimicrobial peptide. Has low activity against the Gram-positive bacterium S.aureus (MIC&gt;100 uM) and the Gram-negative bacterium E.coli (MIC=25 uM). Lacks hemolytic activity against human erythrocytes. The chain is Japonicin-1CDYa from Rana dybowskii (Dybovsky's frog).